Reading from the N-terminus, the 238-residue chain is Aspartate/glutamate leucyltransferase (238 aa).

The protein belongs to the R-transferase family. Bpt subfamily.

Its subcellular location is the cytoplasm. It catalyses the reaction N-terminal L-glutamyl-[protein] + L-leucyl-tRNA(Leu) = N-terminal L-leucyl-L-glutamyl-[protein] + tRNA(Leu) + H(+). The catalysed reaction is N-terminal L-aspartyl-[protein] + L-leucyl-tRNA(Leu) = N-terminal L-leucyl-L-aspartyl-[protein] + tRNA(Leu) + H(+). Functions in the N-end rule pathway of protein degradation where it conjugates Leu from its aminoacyl-tRNA to the N-termini of proteins containing an N-terminal aspartate or glutamate. The polypeptide is Aspartate/glutamate leucyltransferase (Nitrosococcus oceani (strain ATCC 19707 / BCRC 17464 / JCM 30415 / NCIMB 11848 / C-107)).